The following is a 166-amino-acid chain: Short form salivary protein D7R1 (166 aa).

Positions 1-21 are cleaved as a signal peptide; the sequence is MFRKVFSVALVTCGLLVIVQA.

This sequence belongs to the PBP/GOBP family. As to quaternary structure, interacts with host coagulation factor XII (F12) (inactive and activated) (via amino acids 1-77). Interacts with host high molecular weight kininogen (KNG1) (via amino acids 402-532). Female salivary gland (at protein level).

It is found in the secreted. Its activity is regulated as follows. Zn(2+) modulates binding to host coagulation factor XII (F12) and high molecular weight kininogen (KNG1). Its function is as follows. Salivary protein with anticoagulant activity that targets the intrinsic blood coagulation pathway in the host. Inhibits activation of the host plasma contact system by preventing the reciprocal activation of host coagulation factor XII (F12) and prekallikrein (KLKB1). Attenuates generation of bradykinin in host plasma. May bind and sequester different mediators involved in the host response, such as serotonin and histamine. This Anopheles stephensi (Indo-Pakistan malaria mosquito) protein is Short form salivary protein D7R1.